The chain runs to 543 residues: Carboxypeptidase Y homolog A (543 aa).

Residues Met1 to Ala17 form the signal peptide. The propeptide occupies Gln18–Lys124. 5 disulfide bridges follow: Cys179-Cys419, Cys313-Cys327, Cys337-Cys360, Cys344-Cys353, and Cys382-Cys389. An N-linked (GlcNAc...) asparagine glycan is attached at Asn210. Residue Ser266 is part of the active site. Asp458 is an active-site residue. N-linked (GlcNAc...) asparagine glycosylation occurs at Asn509. His520 is an active-site residue.

This sequence belongs to the peptidase S10 family.

The protein localises to the vacuole. The catalysed reaction is Release of a C-terminal amino acid with broad specificity.. Vacuolar carboxypeptidase involved in degradation of small peptides. Digests preferentially peptides containing an aliphatic or hydrophobic residue in P1' position, as well as methionine, leucine or phenylalanine in P1 position of ester substrate. The polypeptide is Carboxypeptidase Y homolog A (CPYA) (Trichophyton equinum (Horse ringworm fungus)).